A 349-amino-acid polypeptide reads, in one-letter code: Isopentenyl-diphosphate delta-isomerase (349 aa).

6 to 7 (RK) contacts substrate. FMN-binding positions include 62 to 64 (AMT), S93, and N122. Q152 contacts substrate. Residue E153 coordinates Mg(2+). FMN-binding positions include K184, T214, 258–259 (GG), and 280–281 (AG).

It belongs to the IPP isomerase type 2 family. Homooctamer. Dimer of tetramers. FMN is required as a cofactor. The cofactor is NADPH. Requires Mg(2+) as cofactor.

The protein resides in the cytoplasm. The catalysed reaction is isopentenyl diphosphate = dimethylallyl diphosphate. Functionally, involved in the biosynthesis of isoprenoids. Catalyzes the 1,3-allylic rearrangement of the homoallylic substrate isopentenyl (IPP) to its allylic isomer, dimethylallyl diphosphate (DMAPP). This Bacillus cytotoxicus (strain DSM 22905 / CIP 110041 / 391-98 / NVH 391-98) protein is Isopentenyl-diphosphate delta-isomerase.